The primary structure comprises 272 residues: Tryptophan synthase alpha chain (272 aa).

Catalysis depends on proton acceptor residues Glu49 and Asp60.

Belongs to the TrpA family. In terms of assembly, tetramer of two alpha and two beta chains.

The enzyme catalyses (1S,2R)-1-C-(indol-3-yl)glycerol 3-phosphate + L-serine = D-glyceraldehyde 3-phosphate + L-tryptophan + H2O. The protein operates within amino-acid biosynthesis; L-tryptophan biosynthesis; L-tryptophan from chorismate: step 5/5. The alpha subunit is responsible for the aldol cleavage of indoleglycerol phosphate to indole and glyceraldehyde 3-phosphate. The sequence is that of Tryptophan synthase alpha chain from Psychrobacter cryohalolentis (strain ATCC BAA-1226 / DSM 17306 / VKM B-2378 / K5).